Here is a 167-residue protein sequence, read N- to C-terminus: uncharacterized protein (167 aa).

The segment at 148–167 (NKESRGENDGGEERESANIY) is disordered.

This is an uncharacterized protein from Homo sapiens (Human).